The following is a 399-amino-acid chain: Tryptophan synthase beta chain (399 aa).

An N6-(pyridoxal phosphate)lysine modification is found at K92.

It belongs to the TrpB family. In terms of assembly, tetramer of two alpha and two beta chains. Pyridoxal 5'-phosphate serves as cofactor.

It catalyses the reaction (1S,2R)-1-C-(indol-3-yl)glycerol 3-phosphate + L-serine = D-glyceraldehyde 3-phosphate + L-tryptophan + H2O. Its pathway is amino-acid biosynthesis; L-tryptophan biosynthesis; L-tryptophan from chorismate: step 5/5. The beta subunit is responsible for the synthesis of L-tryptophan from indole and L-serine. The chain is Tryptophan synthase beta chain from Exiguobacterium sibiricum (strain DSM 17290 / CCUG 55495 / CIP 109462 / JCM 13490 / 255-15).